Here is a 477-residue protein sequence, read N- to C-terminus: UDP-N-acetylmuramate--L-alanine ligase (477 aa).

118–124 (GTHGKTS) contacts ATP.

The protein belongs to the MurCDEF family.

Its subcellular location is the cytoplasm. The enzyme catalyses UDP-N-acetyl-alpha-D-muramate + L-alanine + ATP = UDP-N-acetyl-alpha-D-muramoyl-L-alanine + ADP + phosphate + H(+). The protein operates within cell wall biogenesis; peptidoglycan biosynthesis. Its function is as follows. Cell wall formation. This Corynebacterium diphtheriae (strain ATCC 700971 / NCTC 13129 / Biotype gravis) protein is UDP-N-acetylmuramate--L-alanine ligase.